The primary structure comprises 166 residues: Phosphopantetheine adenylyltransferase (166 aa).

Residue Ser-11 participates in substrate binding. ATP contacts are provided by residues 11–12 and His-19; that span reads SF. Substrate contacts are provided by Lys-43, Ala-76, and Arg-90. ATP is bound by residues 91–93, Glu-101, and 126–132; these read GLR and MQPISSS.

Belongs to the bacterial CoaD family. Homohexamer. Mg(2+) is required as a cofactor.

It localises to the cytoplasm. It carries out the reaction (R)-4'-phosphopantetheine + ATP + H(+) = 3'-dephospho-CoA + diphosphate. The protein operates within cofactor biosynthesis; coenzyme A biosynthesis; CoA from (R)-pantothenate: step 4/5. Functionally, reversibly transfers an adenylyl group from ATP to 4'-phosphopantetheine, yielding dephospho-CoA (dPCoA) and pyrophosphate. This is Phosphopantetheine adenylyltransferase from Streptococcus uberis (strain ATCC BAA-854 / 0140J).